The following is a 440-amino-acid chain: Trigger factor (440 aa).

The 86-residue stretch at 163-248 (GDTVNIDFDG…INEIKYKNVP (86 aa)) folds into the PPIase FKBP-type domain.

This sequence belongs to the FKBP-type PPIase family. Tig subfamily.

The protein localises to the cytoplasm. It catalyses the reaction [protein]-peptidylproline (omega=180) = [protein]-peptidylproline (omega=0). In terms of biological role, involved in protein export. Acts as a chaperone by maintaining the newly synthesized protein in an open conformation. Functions as a peptidyl-prolyl cis-trans isomerase. The sequence is that of Trigger factor from Staphylococcus carnosus (strain TM300).